The primary structure comprises 207 residues: 2,3-bisphosphoglycerate-dependent phosphoglycerate mutase (207 aa).

Substrate-binding positions include 10–17 (RHGQSEWN), 23–24 (TG), Arg-62, 89–92 (ERDY), Lys-100, 116–117 (RR), and 160–161 (GN). His-11 serves as the catalytic Tele-phosphohistidine intermediate. Glu-89 (proton donor/acceptor) is an active-site residue.

It belongs to the phosphoglycerate mutase family. BPG-dependent PGAM subfamily. In terms of assembly, homodimer.

The enzyme catalyses (2R)-2-phosphoglycerate = (2R)-3-phosphoglycerate. It functions in the pathway carbohydrate degradation; glycolysis; pyruvate from D-glyceraldehyde 3-phosphate: step 3/5. Functionally, catalyzes the interconversion of 2-phosphoglycerate and 3-phosphoglycerate. The polypeptide is 2,3-bisphosphoglycerate-dependent phosphoglycerate mutase (Bradyrhizobium diazoefficiens (strain JCM 10833 / BCRC 13528 / IAM 13628 / NBRC 14792 / USDA 110)).